A 346-amino-acid chain; its full sequence is Putative transmembrane protein ORF346 (346 aa).

The next 6 membrane-spanning stretches (helical) occupy residues 67-87, 104-124, 134-154, 156-176, 181-201, and 219-241; these read LPII…CIVY, IINP…VGLT, PPYL…SGIY, AIGD…GLFI, IILY…LCLS, and YPFS…LGSY. A disordered region spans residues 294 to 346; it reads SEYPHSENGSGGSGGSGSGSGSGGSGSGGNSGSGGSGSGSSGSGGNSGSGNNG. Residues 302–346 show a composition bias toward gly residues; sequence GSGGSGGSGSGSGSGGSGSGGNSGSGGSGSGSSGSGGNSGSGNNG.

Its subcellular location is the host membrane. The polypeptide is Putative transmembrane protein ORF346 (Acidianus bottle-shaped virus (isolate Italy/Pozzuoli) (ABV)).